The sequence spans 605 residues: uncharacterized protein (605 aa).

The segment at 111 to 151 (VNVNDGKPNDIELSSTSKTENDPPLSLHTTPDDLQGNGVNV) is disordered.

Its subcellular location is the golgi apparatus. This is an uncharacterized protein from Schizosaccharomyces pombe (strain 972 / ATCC 24843) (Fission yeast).